Reading from the N-terminus, the 185-residue chain is Shikimate kinase (185 aa).

An ATP-binding site is contributed by 12 to 17 (GSGKTT). T16 serves as a coordination point for Mg(2+). 3 residues coordinate substrate: D34, R58, and G79. R116 contacts ATP. R135 is a binding site for substrate.

It belongs to the shikimate kinase family. As to quaternary structure, monomer. The cofactor is Mg(2+).

Its subcellular location is the cytoplasm. It carries out the reaction shikimate + ATP = 3-phosphoshikimate + ADP + H(+). It functions in the pathway metabolic intermediate biosynthesis; chorismate biosynthesis; chorismate from D-erythrose 4-phosphate and phosphoenolpyruvate: step 5/7. In terms of biological role, catalyzes the specific phosphorylation of the 3-hydroxyl group of shikimic acid using ATP as a cosubstrate. The protein is Shikimate kinase of Corynebacterium jeikeium (strain K411).